The chain runs to 103 residues: Small ribosomal subunit protein uS14c (103 aa).

The interval Lys34–Asn56 is disordered.

Belongs to the universal ribosomal protein uS14 family. Part of the 30S ribosomal subunit.

The protein resides in the plastid. The protein localises to the chloroplast. Functionally, binds 16S rRNA, required for the assembly of 30S particles. The sequence is that of Small ribosomal subunit protein uS14c from Saccharum hybrid (Sugarcane).